We begin with the raw amino-acid sequence, 1364 residues long: ABC-type transporter cns4 (1364 aa).

In terms of domain architecture, ABC transporter 1 spans 42–290; sequence SRVKESRAKP…MEEMGFLYTD (249 aa). Residues N152 and N214 are each glycosylated (N-linked (GlcNAc...) asparagine). The next 5 helical transmembrane spans lie at 435–455, 483–503, 508–528, 540–560, and 567–587; these read LFFA…GSFA, IPLI…MTGL, EAFL…TALF, AAIK…GFLI, and PWLG…AVLS. N610 carries N-linked (GlcNAc...) asparagine glycosylation. A helical transmembrane segment spans residues 650-670; it reads FAIVWVWWALFVILTVYFTSN. N689, N711, and N739 each carry an N-linked (GlcNAc...) asparagine glycan. A disordered region spans residues 697–732; sequence DEEVGSGPDSHDSRNRSGISPIGDKQETSTDGPSKI. The ABC transporter 2 domain occupies 737–985; sequence IRNTSVFTWK…TVNEYFGRNG (249 aa). 779 to 786 lines the ATP pocket; that stretch reads GSSGAGKT. 6 helical membrane passes run 1076–1094, 1105–1125, 1146–1166, 1185–1205, 1211–1231, and 1245–1265; these read LMLH…WKIG, FTIF…QPLF, AFAT…AVVY, AVFF…QAIA, AIFA…FCGV, and WLYY…FTTF.

This sequence belongs to the ABC transporter superfamily. ABCG family. PDR (TC 3.A.1.205) subfamily.

The protein localises to the cell membrane. ABC-type transporter; part of the gene cluster that mediates the biosynthesis of cordycepin (COR) and pentostatin (PTN), two adenosine analogs with related bioactivity profiles as both mimic adenosine and can inhibit some of the processes that are adenosine dependent. Mediates the pumping of pentostatin but not of cordycepin out of fungal cells. Decreasing intracellular pentostatin releases adenosine deaminase (ADA) inhibition, allowing ADA to deaminate cordycepin into non-toxic 3'-d. This chain is ABC-type transporter cns4, found in Cordyceps militaris (strain CM01) (Caterpillar fungus).